We begin with the raw amino-acid sequence, 318 residues long: Galactinol synthase 1 (318 aa).

K102 is a catalytic residue. Residues D118, D120, and H244 each contribute to the Mn(2+) site.

It belongs to the glycosyltransferase 8 family. Galactosyltransferase subfamily. A divalent metal cation serves as cofactor. Expressed in seeds, mostly in radicle tips.

Its subcellular location is the cytoplasm. The catalysed reaction is myo-inositol + UDP-alpha-D-galactose = alpha-D-galactosyl-(1-&gt;3)-1D-myo-inositol + UDP + H(+). Its function is as follows. Galactinol synthase involved in the biosynthesis of raffinose family oligosaccharides (RFOs) that function as osmoprotectants. May promote plant stress tolerance. The sequence is that of Galactinol synthase 1 (GOLS1) from Solanum lycopersicum (Tomato).